We begin with the raw amino-acid sequence, 332 residues long: UPF0194 membrane protein YbhG (332 aa).

The first 16 residues, 1-16, serve as a signal peptide directing secretion; sequence MMKKPVVIGLAVVVLA. A coiled-coil region spans residues 108-209; it reads EEIAQAAAAV…LNLQDSTLIA (102 aa).

This sequence belongs to the UPF0194 family.

It is found in the periplasm. The chain is UPF0194 membrane protein YbhG from Escherichia coli O45:K1 (strain S88 / ExPEC).